Reading from the N-terminus, the 287-residue chain is Uroplakin-3a (287 aa).

Positions 1–18 are cleaved as a signal peptide; it reads MPPLWVVLALGCLRLGSG. Topologically, residues 19 to 207 are lumenal; it reads VNLQPQLASV…DTWPGRRSGG (189 aa). Residues asparagine 74, asparagine 139, and asparagine 170 are each glycosylated (N-linked (GlcNAc...) asparagine). The chain crosses the membrane as a helical span at residues 208-235; the sequence is MIVITSILGSLPFFLLIGFAGAIVLSLV. Residues 236-287 are Cytoplasmic-facing; sequence DRGDADGATSHDSQITQEAVPKSLGTSEPSYTSVNRGPSLDRAEVYASKLQD. Residues 243 to 274 are disordered; it reads ATSHDSQITQEAVPKSLGTSEPSYTSVNRGPS. The span at 259–271 shows a compositional bias: polar residues; the sequence is LGTSEPSYTSVNR.

The protein belongs to the uroplakin-3 family. In terms of assembly, heterodimer with uroplakin-1B (UPK1B). As to expression, bladder epithelium.

It localises to the endoplasmic reticulum membrane. Its function is as follows. Component of the asymmetric unit membrane (AUM); a highly specialized biomembrane elaborated by terminally differentiated urothelial cells. May play an important role in AUM-cytoskeleton interaction in terminally differentiated urothelial cells. It also contributes to the formation of urothelial glycocalyx which may play an important role in preventing bacterial adherence. This Bos taurus (Bovine) protein is Uroplakin-3a (UPK3A).